A 109-amino-acid polypeptide reads, in one-letter code: MQAIHNDKSLLSPFSELNTDNRTKREESGSTFKEQKGGEFSKLLKQSINELNNTQEQSDKALADMATGQIKDLHQAAIAIGKAETSMKLMLEVRNKAISAYKELLRTQI.

The segment at 1–38 (MQAIHNDKSLLSPFSELNTDNRTKREESGSTFKEQKGG) is disordered. Residues 19–38 (TDNRTKREESGSTFKEQKGG) are compositionally biased toward basic and acidic residues.

It belongs to the FliE family.

Its subcellular location is the bacterial flagellum basal body. The polypeptide is Flagellar hook-basal body complex protein FliE (Helicobacter pylori (strain P12)).